The sequence spans 99 residues: DNA-directed RNA polymerase subunit omega (99 aa).

Positions 55 to 99 are disordered; the sequence is EAGTVISDPNPEEKRERLRIEREERKRQREQEQKELENRLRDEKN. The span at 65–99 shows a compositional bias: basic and acidic residues; sequence PEEKRERLRIEREERKRQREQEQKELENRLRDEKN.

The protein belongs to the RNA polymerase subunit omega family. In terms of assembly, the RNAP catalytic core consists of 2 alpha, 1 beta, 1 beta' and 1 omega subunit. When a sigma factor is associated with the core the holoenzyme is formed, which can initiate transcription.

It catalyses the reaction RNA(n) + a ribonucleoside 5'-triphosphate = RNA(n+1) + diphosphate. Functionally, promotes RNA polymerase assembly. Latches the N- and C-terminal regions of the beta' subunit thereby facilitating its interaction with the beta and alpha subunits. This is DNA-directed RNA polymerase subunit omega from Enterococcus faecalis (strain ATCC 700802 / V583).